The sequence spans 55 residues: UPF0391 membrane protein Neut_2351/Neut_2360 (55 aa).

2 consecutive transmembrane segments (helical) span residues 4–24 and 28–48; these read LAVV…TGVA and AEMA…FWVL.

This sequence belongs to the UPF0391 family.

It is found in the cell membrane. This chain is UPF0391 membrane protein Neut_2351/Neut_2360, found in Nitrosomonas eutropha (strain DSM 101675 / C91 / Nm57).